The following is a 406-amino-acid chain: uncharacterized protein (406 aa).

Its subcellular location is the plastid. The protein localises to the chloroplast. This is an uncharacterized protein from Euglena gracilis.